The primary structure comprises 652 residues: Oligopeptide-binding protein AliB (652 aa).

An N-terminal signal peptide occupies residues 1-24 (MKKSKSKYLTLAGLVLGTGVLLSA). The N-palmitoyl cysteine moiety is linked to residue Cys-25. A lipid anchor (S-diacylglycerol cysteine) is attached at Cys-25.

The protein belongs to the bacterial solute-binding protein 5 family.

The protein localises to the cell membrane. Its function is as follows. Part of the binding-protein-dependent transport system for oligopeptides; probably an oligopeptide binding protein. This chain is Oligopeptide-binding protein AliB (aliB), found in Streptococcus pneumoniae serotype 4 (strain ATCC BAA-334 / TIGR4).